The following is an 85-amino-acid chain: Makatoxin-3 (85 aa).

An N-terminal signal peptide occupies residues 1–19; the sequence is MNYLIVISFALLLMTGVES. One can recognise an LCN-type CS-alpha/beta domain in the interval 21–83; that stretch reads RDAYIAKKEN…VPIRIPGPCI (63 aa). Cystine bridges form between Cys31–Cys82, Cys35–Cys55, Cys41–Cys65, and Cys45–Cys67.

It belongs to the long (4 C-C) scorpion toxin superfamily. Sodium channel inhibitor family. Alpha subfamily. In terms of tissue distribution, expressed by the venom gland.

The protein resides in the secreted. This protein markedly relaxes the rat carbachol-precontracted anococcygeus muscle. This relaxation is inhibited by the inhibitor of nitric oxide (NO) synthase, N-nitro-L-arginine methyl ester (L-NAME), suggesting that the response induced by this protein is NO-mediated. This Olivierus martensii (Manchurian scorpion) protein is Makatoxin-3.